The sequence spans 283 residues: (+)-O-methylkolavelool synthase (283 aa).

S-adenosyl-L-methionine-binding positions include glutamine 106, 129–130, and histidine 151; that span reads NA.

This sequence belongs to the methyltransferase superfamily.

The enzyme catalyses (+)-kolavelool + S-adenosyl-L-methionine = (+)-O-methylkolavelool + S-adenosyl-L-homocysteine + H(+). Its function is as follows. Involved in the biosynthesis of the diterpene (+)-O-methylkolavelool. Catalyzes the transfer of a methyl group from S-adenosyl-L-methionine to the hydroxy group of (+)-kolavelool, forming (+)-O-methylkolavelool. This chain is (+)-O-methylkolavelool synthase, found in Herpetosiphon aurantiacus (strain ATCC 23779 / DSM 785 / 114-95).